A 274-amino-acid polypeptide reads, in one-letter code: Endonuclease 8-like L720 (274 aa).

An FPG-type; degenerate zinc finger spans residues 241–274; the sequence is RIYRKSLCPLGHKTIRKKIGLRNRMTTWCPVCQL.

The protein belongs to the FPG family.

This chain is Endonuclease 8-like L720, found in Acanthamoeba polyphaga mimivirus (APMV).